Reading from the N-terminus, the 395-residue chain is Multidrug resistance protein MdtL (395 aa).

Transmembrane regions (helical) follow at residues 4 to 24, 42 to 62, 69 to 89, 93 to 113, 131 to 151, 158 to 178, 217 to 237, 247 to 267, 271 to 291, 295 to 315, 333 to 353, and 358 to 378; these read FLLC…MYLV, IAFS…GKIA, PVAI…SRAS, LFLS…VVAF, LLNG…HLIM, SLFY…LFIL, VSVI…VMGF, ALTA…LGLF, TLML…SLAH, VTLF…GVAM, LGIA…ILGI, and MLIG…FSVA.

It belongs to the major facilitator superfamily. DHA1 family. MdtL (TC 2.A.1.2.22) subfamily.

The protein resides in the cell inner membrane. This chain is Multidrug resistance protein MdtL, found in Salmonella heidelberg (strain SL476).